A 336-amino-acid chain; its full sequence is Foldase protein PrsA (336 aa).

Residues 1–22 (MKSAKKLLSVLCLGIFILTFTA) form the signal peptide. C23 carries the N-palmitoyl cysteine lipid modification. C23 carries S-diacylglycerol cysteine lipidation. Residues 194-286 (PNTMNVSHIL…FGYHIIKINS (93 aa)) form the PpiC domain.

The protein belongs to the PrsA family.

Its subcellular location is the cell membrane. It catalyses the reaction [protein]-peptidylproline (omega=180) = [protein]-peptidylproline (omega=0). In terms of biological role, plays a major role in protein secretion by helping the post-translocational extracellular folding of several secreted proteins. The polypeptide is Foldase protein PrsA (Clostridium botulinum (strain 657 / Type Ba4)).